Reading from the N-terminus, the 140-residue chain is D-ribose pyranase (140 aa).

His20 functions as the Proton donor in the catalytic mechanism. Substrate-binding positions include Asp28, His99, and 121–123 (YSS).

The protein belongs to the RbsD / FucU family. RbsD subfamily. Homodecamer.

The protein localises to the cytoplasm. It catalyses the reaction beta-D-ribopyranose = beta-D-ribofuranose. Its pathway is carbohydrate metabolism; D-ribose degradation; D-ribose 5-phosphate from beta-D-ribopyranose: step 1/2. Catalyzes the interconversion of beta-pyran and beta-furan forms of D-ribose. This Pseudothermotoga lettingae (strain ATCC BAA-301 / DSM 14385 / NBRC 107922 / TMO) (Thermotoga lettingae) protein is D-ribose pyranase.